Here is a 317-residue protein sequence, read N- to C-terminus: 2-keto-3-deoxygluconate permease 1 (317 aa).

10 consecutive transmembrane segments (helical) span residues 10–30 (VPGGMMVVPLVIGAVINTFAP), 47–67 (AAPLIGAFLLCMGAGISVKAA), 82–102 (LLVAIGIGLGVEHLFGAEGIF), 106–126 (GVAIIAAMSNSNGGLYAALVG), 134–154 (VGAISILSLNDGPFFTMIALG), 159–179 (ANIPIMALVAVLVPLVVGMIL), 195–215 (PLLIPFFAFALGAGINLEMLL), 217–237 (GGLAGILLGVLTTFVGGFFNI), 248–268 (IAGAAASSTAGNAVATPLAIA), and 279–299 (AAAAPLIAASVITTAILTPVL).

Belongs to the KdgT transporter family.

Its subcellular location is the cell inner membrane. The catalysed reaction is 2-dehydro-3-deoxy-D-gluconate(in) + H(+)(in) = 2-dehydro-3-deoxy-D-gluconate(out) + H(+)(out). In terms of biological role, catalyzes the proton-dependent uptake of 2-keto-3-deoxygluconate (KDG) into the cell. This Salmonella typhi protein is 2-keto-3-deoxygluconate permease 1.